Reading from the N-terminus, the 189-residue chain is Protein GrpE (189 aa).

Basic and acidic residues predominate over residues 1–38; sequence MTKSNETERMEESEETHSSDIRSASESDHASGSDHTES. The disordered stretch occupies residues 1–54; sequence MTKSNETERMEESEETHSSDIRSASESDHASGSDHTESADEIPTADAEQGELEQ.

This sequence belongs to the GrpE family. As to quaternary structure, homodimer.

The protein resides in the cytoplasm. In terms of biological role, participates actively in the response to hyperosmotic and heat shock by preventing the aggregation of stress-denatured proteins, in association with DnaK and GrpE. It is the nucleotide exchange factor for DnaK and may function as a thermosensor. Unfolded proteins bind initially to DnaJ; upon interaction with the DnaJ-bound protein, DnaK hydrolyzes its bound ATP, resulting in the formation of a stable complex. GrpE releases ADP from DnaK; ATP binding to DnaK triggers the release of the substrate protein, thus completing the reaction cycle. Several rounds of ATP-dependent interactions between DnaJ, DnaK and GrpE are required for fully efficient folding. In Tropheryma whipplei (strain Twist) (Whipple's bacillus), this protein is Protein GrpE.